A 552-amino-acid polypeptide reads, in one-letter code: Putative phosphate permease MT2339 (552 aa).

13 helical membrane-spanning segments follow: residues 38–58, 69–89, 107–127, 146–166, 178–198, 213–233, 326–346, 360–380, 389–409, 437–457, 472–492, 493–513, and 526–546; these read WHLS…WWAF, ILVL…GNDV, ALLV…GDVT, DFMN…LFAN, IIGG…QGGA, VSWV…YGVI, VPLV…FKGF, FIIA…AKTL, TFLM…FSHG, AVPA…LWFI, MHPA…MGAT, VLGL…GVGI, and IVLA…VGLV.

This sequence belongs to the inorganic phosphate transporter (PiT) (TC 2.A.20) family.

Its subcellular location is the cell membrane. Its function is as follows. Potential transporter for phosphate. The protein is Putative phosphate permease MT2339 of Mycobacterium tuberculosis (strain CDC 1551 / Oshkosh).